Reading from the N-terminus, the 63-residue chain is Large ribosomal subunit protein uL29 (63 aa).

It belongs to the universal ribosomal protein uL29 family.

This Shewanella halifaxensis (strain HAW-EB4) protein is Large ribosomal subunit protein uL29.